A 330-amino-acid chain; its full sequence is Ketol-acid reductoisomerase (NADP(+)) (330 aa).

Positions 1 to 182 (MKKVYYDQDA…GCTRAGVFET (182 aa)) constitute a KARI N-terminal Rossmann domain. Residues 25 to 28 (YGSQ), S51, S53, and 83 to 86 (DQIQ) contribute to the NADP(+) site. H108 is an active-site residue. G134 is a binding site for NADP(+). One can recognise a KARI C-terminal knotted domain in the interval 183–328 (TFKEETETDL…AELRQMMPWL (146 aa)). Mg(2+)-binding residues include D191, E195, E227, and E231. Residue S252 participates in substrate binding.

This sequence belongs to the ketol-acid reductoisomerase family. The cofactor is Mg(2+).

It catalyses the reaction (2R)-2,3-dihydroxy-3-methylbutanoate + NADP(+) = (2S)-2-acetolactate + NADPH + H(+). The enzyme catalyses (2R,3R)-2,3-dihydroxy-3-methylpentanoate + NADP(+) = (S)-2-ethyl-2-hydroxy-3-oxobutanoate + NADPH + H(+). It participates in amino-acid biosynthesis; L-isoleucine biosynthesis; L-isoleucine from 2-oxobutanoate: step 2/4. Its pathway is amino-acid biosynthesis; L-valine biosynthesis; L-valine from pyruvate: step 2/4. In terms of biological role, involved in the biosynthesis of branched-chain amino acids (BCAA). Catalyzes an alkyl-migration followed by a ketol-acid reduction of (S)-2-acetolactate (S2AL) to yield (R)-2,3-dihydroxy-isovalerate. In the isomerase reaction, S2AL is rearranged via a Mg-dependent methyl migration to produce 3-hydroxy-3-methyl-2-ketobutyrate (HMKB). In the reductase reaction, this 2-ketoacid undergoes a metal-dependent reduction by NADPH to yield (R)-2,3-dihydroxy-isovalerate. The protein is Ketol-acid reductoisomerase (NADP(+)) of Carboxydothermus hydrogenoformans (strain ATCC BAA-161 / DSM 6008 / Z-2901).